The primary structure comprises 276 residues: Small ribosomal subunit protein uS2 (276 aa).

The segment at 226 to 276 is disordered; sequence KKAREERQLAAAREAAGEPKSEDAPAEAAATEEAPATEAPAAEAQQENAAE. The segment covering 251-276 has biased composition (low complexity); sequence AEAAATEEAPATEAPAAEAQQENAAE.

This sequence belongs to the universal ribosomal protein uS2 family.

The polypeptide is Small ribosomal subunit protein uS2 (Corynebacterium efficiens (strain DSM 44549 / YS-314 / AJ 12310 / JCM 11189 / NBRC 100395)).